A 603-amino-acid chain; its full sequence is Putative lipase atg15 (603 aa).

The Cytoplasmic portion of the chain corresponds to 1 to 20 (MDQPHRRTRKWHLMDLSVST). The chain crosses the membrane as a helical; Signal-anchor for type II membrane protein span at residues 21–41 (LLMSLALVLPSCVSAYQPVYF). The Lumenal segment spans residues 42-603 (RSQEATPFIP…ITPAPILIDL (562 aa)). N-linked (GlcNAc...) asparagine glycans are attached at residues Asn-166, Asn-201, Asn-223, Asn-281, and Asn-305. The active-site Charge relay system is Ser-321. N-linked (GlcNAc...) asparagine glycosylation occurs at Asn-467.

The protein belongs to the AB hydrolase superfamily. Lipase family. In terms of assembly, binds to both phosphatidylinositol (PI) and phosphatidylinositol 3,5-bisphosphate (PIP2).

The protein resides in the endosome. It localises to the multivesicular body membrane. The protein localises to the prevacuolar compartment membrane. The enzyme catalyses a triacylglycerol + H2O = a diacylglycerol + a fatty acid + H(+). In terms of biological role, lipase which is essential for lysis of subvacuolar cytoplasm to vacuole targeted bodies and intravacuolar autophagic bodies. Involved in the lysis of intravacuolar multivesicular body (MVB) vesicles. The intravacuolar membrane disintegration by atg15 is critical to life span extension. This chain is Putative lipase atg15 (atg15), found in Emericella nidulans (strain FGSC A4 / ATCC 38163 / CBS 112.46 / NRRL 194 / M139) (Aspergillus nidulans).